The primary structure comprises 235 residues: Elongation factor Tu (235 aa).

The region spanning 1–125 (KNMITGAAQM…QVDEYIPAPE (125 aa)) is the tr-type G domain. 47–50 (NKQD) is a binding site for GTP.

Belongs to the TRAFAC class translation factor GTPase superfamily. Classic translation factor GTPase family. EF-Tu/EF-1A subfamily. Monomer.

The protein localises to the cytoplasm. It carries out the reaction GTP + H2O = GDP + phosphate + H(+). GTP hydrolase that promotes the GTP-dependent binding of aminoacyl-tRNA to the A-site of ribosomes during protein biosynthesis. The sequence is that of Elongation factor Tu (tufA) from Leptolyngbya ectocarpi (Phormidium ectocarpi).